The following is a 207-amino-acid chain: Chloramphenicol acetyltransferase (207 aa).

Residue histidine 186 is the Proton acceptor of the active site.

Belongs to the chloramphenicol acetyltransferase family. In terms of assembly, homotrimer.

The catalysed reaction is chloramphenicol + acetyl-CoA = chloramphenicol 3-acetate + CoA. Its function is as follows. This enzyme is an effector of chloramphenicol resistance in bacteria. The chain is Chloramphenicol acetyltransferase from Campylobacter coli.